The sequence spans 591 residues: Protein kinase C zeta type (591 aa).

Residues 15 to 98 (RVRLKAHYSG…DGLILHVFPS (84 aa)) enclose the PB1 domain. Positions 79–145 (AFRLAGQHRD…KRFNRRAYCG (67 aa)) are interaction with SQSTM1. The segment at 130 to 180 (GHLFQAKRFNRRAYCGQCSERIWGLARQGYRCINCKLLVHKRCHGLVPLTC) adopts a Phorbol-ester/DAG-type zinc-finger fold. The Protein kinase domain occupies 251 to 517 (FDLIRVIGRG…FSDIKSHAFF (267 aa)). ATP-binding positions include 257–265 (IGRGSYAKV) and Lys280. The active-site Proton acceptor is Asp375. Thr409 carries the phosphothreonine; by PDPK1 and PI3K modification. The AGC-kinase C-terminal domain occupies 518–589 (RSIDWDLLEK…INPLLLSTEE (72 aa)). At Thr559 the chain carries Phosphothreonine. At Ser590 the chain carries Phosphoserine.

Belongs to the protein kinase superfamily. AGC Ser/Thr protein kinase family. PKC subfamily. Interacts with PARD6A, PARD6B and PARD6G. Part of a complex with PARD3, PARD6A or PARD6B or PARD6G and CDC42 or RAC1. Interacts with ADAP1/CENTA1. Interacts directly with SQSTM1. Forms a ternary complex with SQSTM1 and KCNAB2. Forms another ternary complex with SQSTM1 and GABRR3. Forms a complex with SQSTM1 and MAP2K5. Interacts (via the protein kinase domain) with WWC1. Forms a tripartite complex with WWC1 and DDR1, but predominantly in the absence of collagen. Component of the Par polarity complex, composed of at least phosphorylated PRKCZ, PARD3 and TIAM1. Interacts with PDPK1 (via N-terminal region). Interacts with WDFY2 (via WD repeats 1-3). Interacts with VAMP2. Forms a complex with WDFY2 and VAMP2. Interacts with APPL1. Interacts with WWC1, WWC2 and WWC3. Post-translationally, CDH5 is required for its phosphorylation at Thr-409. Phosphorylated by protein kinase PDPK1; phosphorylation is inhibited by the apoptotic C-terminal cleavage product of PKN2. Phosphorylation at Thr-409 by PI3K activates the kinase.

The protein resides in the cytoplasm. It is found in the endosome. The protein localises to the cell junction. It localises to the membrane. The enzyme catalyses L-seryl-[protein] + ATP = O-phospho-L-seryl-[protein] + ADP + H(+). The catalysed reaction is L-threonyl-[protein] + ATP = O-phospho-L-threonyl-[protein] + ADP + H(+). With respect to regulation, atypical PKCs (PRKCI and PRKCZ) exhibit an elevated basal enzymatic activity (that may be due to the interaction with SMG1 or SQSTM1) and are not regulated by diacylglycerol, phosphatidylserine, phorbol esters or calcium ions. Two specific sites, Thr-409 (activation loop of the kinase domain) and Thr-559 (turn motif), need to be phosphorylated for its full activation. Phosphatidylinositol 3,4,5-trisphosphate might be a physiological activator. In terms of biological role, calcium- and diacylglycerol-independent serine/threonine-protein kinase that functions in phosphatidylinositol 3-kinase (PI3K) pathway and mitogen-activated protein (MAP) kinase cascade, and is involved in NF-kappa-B activation, mitogenic signaling, cell proliferation, cell polarity, inflammatory response and maintenance of long-term potentiation (LTP). Upon lipopolysaccharide (LPS) treatment in macrophages, or following mitogenic stimuli, functions downstream of PI3K to activate MAP2K1/MEK1-MAPK1/ERK2 signaling cascade independently of RAF1 activation. Required for insulin-dependent activation of AKT3, but may function as an adapter rather than a direct activator. Upon insulin treatment may act as a downstream effector of PI3K and contribute to the activation of translocation of the glucose transporter SLC2A4/GLUT4 and subsequent glucose transport in adipocytes. In EGF-induced cells, binds and activates MAP2K5/MEK5-MAPK7/ERK5 independently of its kinase activity and can activate JUN promoter through MEF2C. Through binding with SQSTM1/p62, functions in interleukin-1 signaling and activation of NF-kappa-B with the specific adapters RIPK1 and TRAF6. Participates in TNF-dependent transactivation of NF-kappa-B by phosphorylating and activating IKBKB kinase, which in turn leads to the degradation of NF-kappa-B inhibitors. In migrating astrocytes, forms a cytoplasmic complex with PARD6A and is recruited by CDC42 to function in the establishment of cell polarity along with the microtubule motor and dynein. In association with FEZ1, stimulates neuronal differentiation in PC12 cells. In the inflammatory response, is required for the T-helper 2 (Th2) differentiation process, including interleukin production, efficient activation of JAK1 and the subsequent phosphorylation and nuclear translocation of STAT6. May be involved in development of allergic airway inflammation (asthma), a process dependent on Th2 immune response. In the NF-kappa-B-mediated inflammatory response, can relieve SETD6-dependent repression of NF-kappa-B target genes by phosphorylating the RELA subunit at 'Ser-311'. Phosphorylates VAMP2 in vitro. Phosphorylates and activates LRRK1, which phosphorylates RAB proteins involved in intracellular trafficking. The protein is Protein kinase C zeta type (PRKCZ) of Oryctolagus cuniculus (Rabbit).